We begin with the raw amino-acid sequence, 338 residues long: Tryptophan--tRNA ligase (338 aa).

ATP contacts are provided by residues 11 to 13 and 19 to 20; these read QPS and GN. A 'HIGH' region motif is present at residues 12-20; the sequence is PSGELSIGN. Asp-135 serves as a coordination point for L-tryptophan. Residues 147–149, Val-189, and 198–202 contribute to the ATP site; these read GSD and KMSKS. The 'KMSKS' region motif lies at 198–202; the sequence is KMSKS.

The protein belongs to the class-I aminoacyl-tRNA synthetase family. Homodimer.

Its subcellular location is the cytoplasm. The catalysed reaction is tRNA(Trp) + L-tryptophan + ATP = L-tryptophyl-tRNA(Trp) + AMP + diphosphate + H(+). Catalyzes the attachment of tryptophan to tRNA(Trp). In Vibrio vulnificus (strain YJ016), this protein is Tryptophan--tRNA ligase.